Reading from the N-terminus, the 89-residue chain is MTSEFHNEDQTGFTDKRQLELAVETAQKTTGAATRGQSKTLVDSAYQAIEDARELSQSEELAALDDPEFVKQQQQLLDDSEHQLDEFKE.

This is an uncharacterized protein from Bacillus subtilis (strain 168).